Reading from the N-terminus, the 124-residue chain is Phosphoribosyl-AMP cyclohydrolase (124 aa).

Mg(2+) is bound at residue aspartate 82. Residue cysteine 83 coordinates Zn(2+). 2 residues coordinate Mg(2+): aspartate 84 and aspartate 86. Residues cysteine 99 and cysteine 106 each contribute to the Zn(2+) site.

It belongs to the PRA-CH family. Homodimer. It depends on Mg(2+) as a cofactor. Requires Zn(2+) as cofactor.

The protein resides in the cytoplasm. The catalysed reaction is 1-(5-phospho-beta-D-ribosyl)-5'-AMP + H2O = 1-(5-phospho-beta-D-ribosyl)-5-[(5-phospho-beta-D-ribosylamino)methylideneamino]imidazole-4-carboxamide. It participates in amino-acid biosynthesis; L-histidine biosynthesis; L-histidine from 5-phospho-alpha-D-ribose 1-diphosphate: step 3/9. Functionally, catalyzes the hydrolysis of the adenine ring of phosphoribosyl-AMP. This is Phosphoribosyl-AMP cyclohydrolase from Zymomonas mobilis subsp. mobilis (strain ATCC 31821 / ZM4 / CP4).